The chain runs to 248 residues: Probable transcriptional regulatory protein Mchl_0946 (248 aa).

This sequence belongs to the TACO1 family.

The protein localises to the cytoplasm. This Methylorubrum extorquens (strain CM4 / NCIMB 13688) (Methylobacterium extorquens) protein is Probable transcriptional regulatory protein Mchl_0946.